A 522-amino-acid chain; its full sequence is Amine oxidase [flavin-containing] (522 aa).

At 1 to 492 (MTAQNTFDVI…FWERNLPSVG (492 aa)) the chain is on the cytoplasmic side. Position 399 is an S-8alpha-FAD cysteine (C399). Residues 493 to 513 (GFINFLAASVLSVATAAGMLA) form a helical; Anchor for type IV membrane protein membrane-spanning segment. Topologically, residues 514–522 (YQKGLLTRS) are mitochondrial intermembrane.

It belongs to the flavin monoamine oxidase family. FAD serves as cofactor.

The protein localises to the mitochondrion outer membrane. It carries out the reaction a secondary aliphatic amine + O2 + H2O = a primary amine + an aldehyde + H2O2. Catalyzes the oxidative deamination of biogenic and xenobiotic amines and has important functions in the metabolism of neuroactive and vasoactive amines in the central nervous system and peripheral tissues. Oxidizes both 5-hydroxytryptamine (5-HT) and beta-phenylethylamine (PEA). The polypeptide is Amine oxidase [flavin-containing] (mao) (Oncorhynchus mykiss (Rainbow trout)).